Here is a 479-residue protein sequence, read N- to C-terminus: MSQGEIVQVIGLVVDVKFSIGKDLPDINNALKVIKSDDDSIILEVILEQGDGVLRCIAMESTDGLRRGMKVEDTGSSISVPVGPDTLGRVFNVLGQPIDGGPEFPADHPRSGIHKEAPKYDELTTSREILETGIKVIDLLEPYLRGGKVGLFGGAGVGKTTIIQELIHNIAQEHNGISVFTGVGERTREGNDLYFEMKASGVLDKTAMVFGQMNEPPGARMRVALTGLTIAEYFRDVEGQDVLLFIDNIFRFTQAGSEVSALLGRIPSAVGYQPTLATEMGQLQERITSTKKGSITSIQAVYVPADDYTDPAPATTFAYLDATTNLERSLVEQGIYPAVDPLESTSSALDPEIVGQEHYDVATRVQHILQRYRELQNIISVLGMDELSDEEKLIVARARRIQFFLSQNFFVAEVFTSVPGSYVPIKETIKGFKMILDGHLDDLPEDAFRGVGPIEDVLKKALKMGVTPSDPEAKALLEK.

153–160 (GGAGVGKT) contributes to the ATP binding site.

This sequence belongs to the ATPase alpha/beta chains family. F-type ATPases have 2 components, CF(1) - the catalytic core - and CF(0) - the membrane proton channel. CF(1) has five subunits: alpha(3), beta(3), gamma(1), delta(1), epsilon(1). CF(0) has three main subunits: a(1), b(2) and c(9-12). The alpha and beta chains form an alternating ring which encloses part of the gamma chain. CF(1) is attached to CF(0) by a central stalk formed by the gamma and epsilon chains, while a peripheral stalk is formed by the delta and b chains.

The protein resides in the cell membrane. The enzyme catalyses ATP + H2O + 4 H(+)(in) = ADP + phosphate + 5 H(+)(out). Functionally, produces ATP from ADP in the presence of a proton gradient across the membrane. The catalytic sites are hosted primarily by the beta subunits. This is ATP synthase subunit beta from Lactobacillus delbrueckii subsp. bulgaricus (strain ATCC 11842 / DSM 20081 / BCRC 10696 / JCM 1002 / NBRC 13953 / NCIMB 11778 / NCTC 12712 / WDCM 00102 / Lb 14).